The sequence spans 364 residues: Protein leg1a (364 aa).

An N-terminal signal peptide occupies residues 1 to 22; sequence MSEMGFLRSVAAVLLLAVFSHA. N-linked (GlcNAc...) asparagine glycosylation occurs at Asn70.

Belongs to the LEG1 family. In terms of tissue distribution, detected in all tissues tested, with the highest levels in serum (at protein level). At mRNA level, only expressed in liver.

It is found in the secreted. In terms of biological role, important for early development of liver, exocrine pancreas and intestine, probably through cell cycle regulation. In liver, its function is partially redundant with leg1b function. In Danio rerio (Zebrafish), this protein is Protein leg1a.